We begin with the raw amino-acid sequence, 409 residues long: Menaquinone reductase (409 aa).

FAD contacts are provided by residues Gly-11–Ala-15, Cys-44–Gly-47, Arg-101, Val-125, Asp-288, and Gly-300–Ile-301.

This sequence belongs to the geranylgeranyl reductase family. The cofactor is FAD.

The catalysed reaction is menaquinone-9 + AH2 = beta-dihydromenaquinone-9 + A. Its pathway is quinol/quinone metabolism; menaquinone biosynthesis. Catalyzes the reduction of a single double bond in the isoprenoid tail of menaquinone (MK-9) in M.smegmatis, likely the beta-isoprene unit, forming the predominant form of menaquinone found in mycobacteria, MK-9(II-H2). In Mycolicibacterium smegmatis (strain ATCC 700084 / mc(2)155) (Mycobacterium smegmatis), this protein is Menaquinone reductase.